A 701-amino-acid chain; its full sequence is Polyribonucleotide nucleotidyltransferase (701 aa).

Mg(2+) is bound by residues D487 and D493. The 60-residue stretch at P554–V613 folds into the KH domain. The S1 motif domain occupies G623–K691.

Belongs to the polyribonucleotide nucleotidyltransferase family. As to quaternary structure, component of the RNA degradosome, which is a multiprotein complex involved in RNA processing and mRNA degradation. Requires Mg(2+) as cofactor.

It is found in the cytoplasm. The catalysed reaction is RNA(n+1) + phosphate = RNA(n) + a ribonucleoside 5'-diphosphate. In terms of biological role, involved in mRNA degradation. Catalyzes the phosphorolysis of single-stranded polyribonucleotides processively in the 3'- to 5'-direction. In Pseudomonas syringae pv. tomato (strain ATCC BAA-871 / DC3000), this protein is Polyribonucleotide nucleotidyltransferase.